Consider the following 270-residue polypeptide: Putative pyruvate, phosphate dikinase regulatory protein (270 aa).

148–155 (GISRTSKT) is an ADP binding site.

It belongs to the pyruvate, phosphate/water dikinase regulatory protein family. PDRP subfamily.

The enzyme catalyses N(tele)-phospho-L-histidyl/L-threonyl-[pyruvate, phosphate dikinase] + ADP = N(tele)-phospho-L-histidyl/O-phospho-L-threonyl-[pyruvate, phosphate dikinase] + AMP + H(+). It catalyses the reaction N(tele)-phospho-L-histidyl/O-phospho-L-threonyl-[pyruvate, phosphate dikinase] + phosphate + H(+) = N(tele)-phospho-L-histidyl/L-threonyl-[pyruvate, phosphate dikinase] + diphosphate. Its function is as follows. Bifunctional serine/threonine kinase and phosphorylase involved in the regulation of the pyruvate, phosphate dikinase (PPDK) by catalyzing its phosphorylation/dephosphorylation. In Bacillus cereus (strain AH187), this protein is Putative pyruvate, phosphate dikinase regulatory protein.